The primary structure comprises 577 residues: Proline--tRNA ligase (577 aa).

This sequence belongs to the class-II aminoacyl-tRNA synthetase family. ProS type 1 subfamily. As to quaternary structure, homodimer.

The protein localises to the cytoplasm. The enzyme catalyses tRNA(Pro) + L-proline + ATP = L-prolyl-tRNA(Pro) + AMP + diphosphate. Catalyzes the attachment of proline to tRNA(Pro) in a two-step reaction: proline is first activated by ATP to form Pro-AMP and then transferred to the acceptor end of tRNA(Pro). As ProRS can inadvertently accommodate and process non-cognate amino acids such as alanine and cysteine, to avoid such errors it has two additional distinct editing activities against alanine. One activity is designated as 'pretransfer' editing and involves the tRNA(Pro)-independent hydrolysis of activated Ala-AMP. The other activity is designated 'posttransfer' editing and involves deacylation of mischarged Ala-tRNA(Pro). The misacylated Cys-tRNA(Pro) is not edited by ProRS. The polypeptide is Proline--tRNA ligase (Janthinobacterium sp. (strain Marseille) (Minibacterium massiliensis)).